The primary structure comprises 152 residues: Homeobox protein ceh-63 (152 aa).

Over residues 21–30 the composition is skewed to polar residues; that stretch reads NDTNSSQQIK. Disordered stretches follow at residues 21–48 and 92–126; these read NDTN…RTTF and RRTK…SQHV. Residues 35-44 show a composition bias toward basic residues; it reads PPKRSNRPTK. The homeobox DNA-binding region spans 41–100; sequence RPTKRTTFTSEQVTLLELEFAKNEYICKDRRGELAQTIELTECQVKTWFQNRRTKKRRCT. Over residues 116 to 126 the composition is skewed to polar residues; the sequence is PSPQNPSSQHV.

May interact with homeobox protein ceh-14.

The protein resides in the nucleus. Probable transcription factor, modulating expression of helix-loop-helix protein mbr-1, perhaps acting in concert with homeobox protein ceh-14. May play a minor role in axon guidance in the DVC interneuron. The polypeptide is Homeobox protein ceh-63 (Caenorhabditis elegans).